A 370-amino-acid polypeptide reads, in one-letter code: UDP-N-acetylglucosamine--N-acetylmuramyl-(pentapeptide) pyrophosphoryl-undecaprenol N-acetylglucosamine transferase (370 aa).

Residues 14-16 (TGG), asparagine 125, arginine 168, serine 196, and glutamine 297 contribute to the UDP-N-acetyl-alpha-D-glucosamine site.

Belongs to the glycosyltransferase 28 family. MurG subfamily.

It is found in the cell inner membrane. The enzyme catalyses di-trans,octa-cis-undecaprenyl diphospho-N-acetyl-alpha-D-muramoyl-L-alanyl-D-glutamyl-meso-2,6-diaminopimeloyl-D-alanyl-D-alanine + UDP-N-acetyl-alpha-D-glucosamine = di-trans,octa-cis-undecaprenyl diphospho-[N-acetyl-alpha-D-glucosaminyl-(1-&gt;4)]-N-acetyl-alpha-D-muramoyl-L-alanyl-D-glutamyl-meso-2,6-diaminopimeloyl-D-alanyl-D-alanine + UDP + H(+). Its pathway is cell wall biogenesis; peptidoglycan biosynthesis. Functionally, cell wall formation. Catalyzes the transfer of a GlcNAc subunit on undecaprenyl-pyrophosphoryl-MurNAc-pentapeptide (lipid intermediate I) to form undecaprenyl-pyrophosphoryl-MurNAc-(pentapeptide)GlcNAc (lipid intermediate II). This Nitrobacter hamburgensis (strain DSM 10229 / NCIMB 13809 / X14) protein is UDP-N-acetylglucosamine--N-acetylmuramyl-(pentapeptide) pyrophosphoryl-undecaprenol N-acetylglucosamine transferase.